Here is a 197-residue protein sequence, read N- to C-terminus: Large ribosomal subunit protein bL25 (197 aa).

The protein belongs to the bacterial ribosomal protein bL25 family. CTC subfamily. Part of the 50S ribosomal subunit; part of the 5S rRNA/L5/L18/L25 subcomplex. Contacts the 5S rRNA. Binds to the 5S rRNA independently of L5 and L18.

Functionally, this is one of the proteins that binds to the 5S RNA in the ribosome where it forms part of the central protuberance. In Lawsonia intracellularis (strain PHE/MN1-00), this protein is Large ribosomal subunit protein bL25.